The following is a 501-amino-acid chain: tRNA (guanine(37)-N(1))-methyltransferase (501 aa).

S-adenosyl-L-methionine-binding positions include His282, 320–321 (DL), 348–349 (DG), and Asn380. The disordered stretch occupies residues 474-501 (LQNDQEPPLKRQKTGDPFSGEPQIASDS).

The protein belongs to the class I-like SAM-binding methyltransferase superfamily. TRM5/TYW2 family. In terms of assembly, monomer.

The protein resides in the mitochondrion matrix. Its subcellular location is the nucleus. It localises to the cytoplasm. The enzyme catalyses guanosine(37) in tRNA + S-adenosyl-L-methionine = N(1)-methylguanosine(37) in tRNA + S-adenosyl-L-homocysteine + H(+). Involved in mitochondrial tRNA methylation. Specifically methylates the N1 position of guanosine-37 in various tRNAs. Methylation is not dependent on the nature of the nucleoside 5' of the target nucleoside. This is the first step in the biosynthesis of wybutosine (yW), a modified base adjacent to the anticodon of tRNAs and required for accurate decoding. The polypeptide is tRNA (guanine(37)-N(1))-methyltransferase (Trmt5) (Mus musculus (Mouse)).